Reading from the N-terminus, the 354-residue chain is Uroporphyrinogen decarboxylase (354 aa).

Residues 30-34, Asp-79, Tyr-154, Ser-209, and His-333 contribute to the substrate site; that span reads RQAGR.

It belongs to the uroporphyrinogen decarboxylase family. As to quaternary structure, homodimer.

The protein resides in the cytoplasm. The catalysed reaction is uroporphyrinogen III + 4 H(+) = coproporphyrinogen III + 4 CO2. It participates in porphyrin-containing compound metabolism; protoporphyrin-IX biosynthesis; coproporphyrinogen-III from 5-aminolevulinate: step 4/4. In terms of biological role, catalyzes the decarboxylation of four acetate groups of uroporphyrinogen-III to yield coproporphyrinogen-III. The sequence is that of Uroporphyrinogen decarboxylase from Mycolicibacterium gilvum (strain PYR-GCK) (Mycobacterium gilvum (strain PYR-GCK)).